We begin with the raw amino-acid sequence, 726 residues long: Tripartite terminase subunit 1 (726 aa).

The C3H1-type zinc finger occupies 189-217 (CMKCYEELTLTPNQGKSLRKRLHGKFCNH). 626–633 (YNDVFGKR) is an ATP binding site.

It belongs to the herpesviridae TRM1 protein family. Associates with TRM2 and TRM3 to form the tripartite terminase complex. Interacts with portal protein.

It localises to the host nucleus. Component of the molecular motor that translocates viral genomic DNA in empty capsid during DNA packaging. Forms a tripartite terminase complex together with TRM2 and TRM3 in the host cytoplasm. Once the complex reaches the host nucleus, it interacts with the capsid portal vertex. This portal forms a ring in which genomic DNA is translocated into the capsid. TRM1 carries an endonuclease activity that plays an important role for the cleavage of concatemeric viral DNA into unit length genomes. This chain is Tripartite terminase subunit 1, found in Human herpesvirus 6B (strain Z29) (HHV-6 variant B).